The following is a 211-amino-acid chain: Protein-L-isoaspartate O-methyltransferase (211 aa).

Ser-62 is a catalytic residue.

It belongs to the methyltransferase superfamily. L-isoaspartyl/D-aspartyl protein methyltransferase family.

The protein resides in the cytoplasm. It catalyses the reaction [protein]-L-isoaspartate + S-adenosyl-L-methionine = [protein]-L-isoaspartate alpha-methyl ester + S-adenosyl-L-homocysteine. Functionally, catalyzes the methyl esterification of L-isoaspartyl residues in peptides and proteins that result from spontaneous decomposition of normal L-aspartyl and L-asparaginyl residues. It plays a role in the repair and/or degradation of damaged proteins. The polypeptide is Protein-L-isoaspartate O-methyltransferase (Shewanella oneidensis (strain ATCC 700550 / JCM 31522 / CIP 106686 / LMG 19005 / NCIMB 14063 / MR-1)).